Here is a 265-residue protein sequence, read N- to C-terminus: MICOS complex subunit Mic27 (265 aa).

The transit peptide at 1–27 (MAAFRMGKLTTIPAGLIYASINVRLAK) directs the protein to the mitochondrion. Over 28 to 110 (EEEPKKQLVR…YVYLKNPPQD (83 aa)) the chain is Mitochondrial intermembrane. A helical membrane pass occupies residues 111-129 (FLPKMGVITASGLAGLLSA). Residues 130 to 137 (RKGSRFKK) lie on the Mitochondrial matrix side of the membrane. A helical membrane pass occupies residues 138–155 (IAYPLGLATLGATVCYPA). The Mitochondrial intermembrane segment spans residues 156–265 (QSVIIAKITG…DDKDMYSTRS (110 aa)). Disordered stretches follow at residues 187–215 (SENE…PDLK) and 229–265 (VIKS…STRS). Phosphoserine is present on Ser204. A compositionally biased stretch (polar residues) spans 229-241 (VIKSESTSGTTQF). The segment covering 246 to 265 (KLMDHGQSHPDDKDMYSTRS) has biased composition (basic and acidic residues).

Belongs to the apolipoprotein O/MICOS complex subunit Mic27 family. Component of the mitochondrial contact site and cristae organizing system (MICOS) complex, composed of at least MICOS10/MIC10, CHCHD3/MIC19, CHCHD6/MIC25, APOOL/MIC27, IMMT/MIC60, APOO/MIC23/MIC26 and MICOS13/MIC13. This complex was also known under the names MINOS or MitOS complex. The MICOS complex associates with mitochondrial outer membrane proteins SAMM50, MTX1 and MTX2 (together described as components of the mitochondrial outer membrane sorting assembly machinery (SAM) complex) and DNAJC11, mitochondrial inner membrane protein TMEM11 and with HSPA9. The MICOS and SAM complexes together with DNAJC11 are part of a large protein complex spanning both membranes termed the mitochondrial intermembrane space bridging (MIB) complex. Interacts with MICOS10/MIC10, IMMT/MIC60 and APOO/MIC23/MIC26.

The protein localises to the mitochondrion inner membrane. The protein resides in the mitochondrion. Component of the MICOS complex, a large protein complex of the mitochondrial inner membrane that plays crucial roles in the maintenance of crista junctions, inner membrane architecture, and formation of contact sites to the outer membrane. Specifically binds to cardiolipin (in vitro) but not to the precursor lipid phosphatidylglycerol. Plays a crucial role in crista junction formation and mitochondrial function. The sequence is that of MICOS complex subunit Mic27 (Apool) from Mus musculus (Mouse).